The following is a 433-amino-acid chain: MSDLTDIQEDITRHEQQLVVARQKLKDAERAVEVDPDDVNKNTLQARQQTVSALEDKLADYKRRMADAVSRKKMDTKPTDPTGIEPDDHLKERSSLRYGNVLDVNAIDIEEPSGQTADWYTIGVYVIGFTIPIILKALYMLSTRGRQTVKENKGTRIRFKDDTSFEDINGIRRPKHLYVSMPTAQSTMKAEELTPGRFRTIVCGLFPTQIQVRNIMSPVMGVIGFSFFVKDWPERIREFMEKECPFIKPEIKPGTPAQEMEMLKRNKIYFMQRQDVLDKNHVADIDKLIDYAASGDPTSPDNIDSPNAPWVFACAPDRCPPTCIYVAGMAELGAFFSILQDMRNTIMASKTVGTAEEKLRKKSSFYQSYLRRTQSMGIQLDQRIILLFMLEWGKEMVDHFHLGDDMDPELRGLAQALIDQKVKEISNQEPLKI.

The segment at 1 to 50 is rdRP binding; it reads MSDLTDIQEDITRHEQQLVVARQKLKDAERAVEVDPDDVNKNTLQARQQT. Homomultimerization regions lie at residues 1 to 79 and 100 to 125; these read MSDL…TKPT and NVLD…IGVY. The tract at residues 1-100 is chaperone activity; the sequence is MSDLTDIQED…KERSSLRYGN (100 aa). The viral panhandle binding stretch occupies residues 1 to 175; the sequence is MSDLTDIQED…EDINGIRRPK (175 aa). A coiled-coil region spans residues 4-71; it reads LTDIQEDITR…KRRMADAVSR (68 aa). Basic and acidic residues predominate over residues 67–78; sequence DAVSRKKMDTKP. The disordered stretch occupies residues 67-91; sequence DAVSRKKMDTKPTDPTGIEPDDHLK. The segment at 80–248 is interaction with glycoprotein N; that stretch reads DPTGIEPDDH…FMEKECPFIK (169 aa). Residues 150-175 are interaction with host RPS19; it reads KENKGTRIRFKDDTSFEDINGIRRPK. The segment at 175–217 is viral RNA-binding; sequence KHLYVSMPTAQSTMKAEELTPGRFRTIVCGLFPTQIQVRNIMS. The YxxL signature appears at 178 to 181; the sequence is YVSM. The interaction with host UBE2I/UBC9 stretch occupies residues 188-191; that stretch reads MKAE. A homomultimerization region spans residues 377–425; it reads GIQLDQRIILLFMLEWGKEMVDHFHLGDDMDPELRGLAQALIDQKVKEI. The tract at residues 377 to 433 is interaction with host DAXX; sequence GIQLDQRIILLFMLEWGKEMVDHFHLGDDMDPELRGLAQALIDQKVKEISNQEPLKI.

This sequence belongs to the hantavirus nucleocapsid protein family. Homotrimer. Homomultimer. Homomultimerizes and binds to viral genomic RNA to form the nucleocapsid. Interacts with host MAP1LC3B; this interaction participates to the protection of Gn from virus-triggered autophagy. Interacts with host SNAP29; this interaction participates to the protection of glycoprotein N from virus-triggered autophagy. Interacts (via N-terminus) with host RPS19; this interaction probably mediates the loading of the 40S ribosomal subunit on viral capped mRNA during N-mediated translation initiation. Interacts with the viral RdRp. Interacts with host SUMO1 (via N-terminus). Interacts with host DAXX. Interacts with the viral glycoprotein N (via C-terminus). Interacts with the viral glycoprotein C (via C-terminus).

Its subcellular location is the virion. The protein localises to the host cytoplasm. It is found in the host perinuclear region. It localises to the host Golgi apparatus. The protein resides in the host cis-Golgi network. In terms of biological role, encapsidates the genome protecting it from nucleases. The encapsidated genomic RNA is termed the nucleocapsid (NC) and serves as template for transcription and replication. The nucleocapsid has a left-handed helical structure. As a trimer, specifically binds and acts as a chaperone to unwind the panhandle structure formed by the viral RNA (vRNA) termini. Involved in the transcription and replication initiation of vRNA by mediating primer annealing. Plays a role in cap snatching by sequestering capped RNAs in P bodies for use by the viral RdRp during transcription initiation. Substitutes for the cellular cap-binding complex (eIF4F) to preferentially facilitate the translation of capped mRNAs. Initiates the translation by specifically binding to the cap and 40S ribosomal subunit. Prevents the viral glycoprotein N (Gn) from autophagy-dependent breakdown maybe by blocking autophagosome formation. Inhibits host EIF2AK2/PKR dimerization to prevent PKR-induced translational shutdown in cells and thus the activation of the antiviral state. Also displays sequence-unspecific DNA endonuclease activity. The polypeptide is Nucleoprotein (N) (Puumala virus (strain Evo/12CG/93)).